A 93-amino-acid polypeptide reads, in one-letter code: Acylphosphatase (93 aa).

Residues 7–93 enclose the Acylphosphatase-like domain; that stretch reads RLTAWVHGWV…TEQITGFSER (87 aa). Catalysis depends on residues Arg-22 and Asn-40.

This sequence belongs to the acylphosphatase family.

The enzyme catalyses an acyl phosphate + H2O = a carboxylate + phosphate + H(+). The sequence is that of Acylphosphatase (acyP) from Mycobacterium tuberculosis (strain ATCC 25177 / H37Ra).